The primary structure comprises 209 residues: Zinc finger SWIM domain-containing protein sws1 (209 aa).

Over residues 1-30 (MQQGHFTSNSYHSKTLNSSSLPVSSKFSHT) the composition is skewed to polar residues. Positions 1–33 (MQQGHFTSNSYHSKTLNSSSLPVSSKFSHTNDP) are disordered. Residues 143–203 (TTIDLKYWYC…HILAASILRA (61 aa)) form an SWIM-type zinc finger.

In terms of assembly, interacts with rdl1, rlp1 and srs2.

The protein localises to the cytoplasm. Its subcellular location is the nucleus. It is found in the nucleoplasm. In terms of biological role, involved in early stages of the homologous recombination repair (HRR) pathway of double-stranded DNA breaks arising during DNA replication or induced by DNA-damaging agents. In Schizosaccharomyces pombe (strain 972 / ATCC 24843) (Fission yeast), this protein is Zinc finger SWIM domain-containing protein sws1 (sws1).